The following is a 1434-amino-acid chain: Pleiotropic drug resistance protein 1 (1434 aa).

Positions 1-22 are disordered; that stretch reads MEPANLSNLRGSSLRGSTRGSL. The ABC transporter 1 domain occupies 161-434; the sequence is LNSLHILSSR…FESMGFKCPQ (274 aa). 194 to 201 is an ATP binding site; sequence GPPSSGKT. Residues 512 to 725 form the ABC transmembrane type-2 1 domain; the sequence is ELLKVCTERE…SVNSILVNEF (214 aa). 7 consecutive transmembrane segments (helical) span residues 530 to 550, 563 to 583, 618 to 638, 649 to 669, 675 to 695, 702 to 722, and 760 to 780; these read FVYM…MTLF, GGIY…NGMS, IPVT…VIGF, FLLL…IGAV, VAST…GFVL, SWWI…SILV, and IGVG…SLAL. The interval 793 to 824 is disordered; sequence LPEDGENAENGEVSSQITSTDGGDSISESQNN. Residues 804–824 show a composition bias toward polar residues; that stretch reads EVSSQITSTDGGDSISESQNN. Residues 837-1089 enclose the ABC transporter 2 domain; it reads ITFDDVVYSV…HLIKYFESNP (253 aa). Position 882 to 889 (882 to 889) interacts with ATP; it reads GVSGAGKT. The ABC transmembrane type-2 2 domain maps to 1162–1376; that stretch reads TQCVACLWKQ…TLYGLVASQF (215 aa). Transmembrane regions (helical) follow at residues 1181 to 1201, 1221 to 1241, 1269 to 1289, 1296 to 1316, 1326 to 1346, 1357 to 1377, and 1406 to 1426; these read YTAV…TMFW, YAAV…VVAI, IPYI…MIGF, FFWY…YGMM, VASI…GFII, WYYW…SQFG, and VVAA…AFAI.

It belongs to the ABC transporter superfamily. ABCG family. PDR (TC 3.A.1.205) subfamily.

It is found in the membrane. Functionally, may be a general defense protein. The protein is Pleiotropic drug resistance protein 1 (PDR1) of Nicotiana tabacum (Common tobacco).